We begin with the raw amino-acid sequence, 279 residues long: MTKFRGCIDIHSGQVKQIVGGTLTQDDSASSKTSSAKENFVSTKPSSHYAQLYKDYNVKGCHVIKLGSNPANDDAAKLALSTWPHNLQVGGGINLDNAQYWLDQGASHVILTSWLFTKNEQDKMELDFGKLREISKLIGKEKLIVDLSCRTVIENGKTNWYVAMNKWQTITDTILSAEFLLKVSAYCDEFLIHAADVEGLCKGIDEKLVENLGEWCPVGFEEKIVYAGGAKSINDLDTVAKLSKGKVDLTYGSSLDIFSGKLVNFTDLVEWNKANSKTN.

The protein belongs to the HisA/HisF family.

Its subcellular location is the cytoplasm. It carries out the reaction 1-(5-phospho-beta-D-ribosyl)-5-[(5-phospho-beta-D-ribosylamino)methylideneamino]imidazole-4-carboxamide = 5-[(5-phospho-1-deoxy-D-ribulos-1-ylimino)methylamino]-1-(5-phospho-beta-D-ribosyl)imidazole-4-carboxamide. The protein operates within amino-acid biosynthesis; L-histidine biosynthesis; L-histidine from 5-phospho-alpha-D-ribose 1-diphosphate: step 4/9. The polypeptide is 1-(5-phosphoribosyl)-5-[(5-phosphoribosylamino)methylideneamino] imidazole-4-carboxamide isomerase (HIS6) (Candida albicans (Yeast)).